Here is a 394-residue protein sequence, read N- to C-terminus: Chalcone synthase 4 (394 aa).

Residue cysteine 165 is part of the active site.

The protein belongs to the thiolase-like superfamily. Chalcone/stilbene synthases family.

The enzyme catalyses (E)-4-coumaroyl-CoA + 3 malonyl-CoA + 3 H(+) = 2',4,4',6'-tetrahydroxychalcone + 3 CO2 + 4 CoA. It participates in secondary metabolite biosynthesis; flavonoid biosynthesis. Its function is as follows. The primary product of this enzyme is 4,2',4',6'-tetrahydroxychalcone (also termed naringenin-chalcone or chalcone) which can under specific conditions spontaneously isomerize into naringenin. The protein is Chalcone synthase 4 (CHS4) of Bromheadia finlaysoniana (Orchid).